A 405-amino-acid chain; its full sequence is Arginine biosynthesis bifunctional protein ArgJ (405 aa).

The substrate site is built by T152, K178, T189, E276, N400, and T405. T189 (nucleophile) is an active-site residue.

This sequence belongs to the ArgJ family. As to quaternary structure, heterotetramer of two alpha and two beta chains.

The protein resides in the cytoplasm. It catalyses the reaction N(2)-acetyl-L-ornithine + L-glutamate = N-acetyl-L-glutamate + L-ornithine. The catalysed reaction is L-glutamate + acetyl-CoA = N-acetyl-L-glutamate + CoA + H(+). Its pathway is amino-acid biosynthesis; L-arginine biosynthesis; L-ornithine and N-acetyl-L-glutamate from L-glutamate and N(2)-acetyl-L-ornithine (cyclic): step 1/1. It participates in amino-acid biosynthesis; L-arginine biosynthesis; N(2)-acetyl-L-ornithine from L-glutamate: step 1/4. Functionally, catalyzes two activities which are involved in the cyclic version of arginine biosynthesis: the synthesis of N-acetylglutamate from glutamate and acetyl-CoA as the acetyl donor, and of ornithine by transacetylation between N(2)-acetylornithine and glutamate. The protein is Arginine biosynthesis bifunctional protein ArgJ of Pseudomonas fluorescens (strain Pf0-1).